Consider the following 225-residue polypeptide: Ribonuclease HII (225 aa).

One can recognise an RNase H type-2 domain in the interval 28–220 (DIIAGTDEVG…VKEYVDISQE (193 aa)). Positions 34, 35, and 129 each coordinate a divalent metal cation.

The protein belongs to the RNase HII family. Mn(2+) serves as cofactor. Requires Mg(2+) as cofactor.

Its subcellular location is the cytoplasm. The catalysed reaction is Endonucleolytic cleavage to 5'-phosphomonoester.. Functionally, endonuclease that specifically degrades the RNA of RNA-DNA hybrids. This Desulfotalea psychrophila (strain LSv54 / DSM 12343) protein is Ribonuclease HII.